Reading from the N-terminus, the 167-residue chain is Photosystem I assembly protein Ycf3 (167 aa).

TPR repeat units follow at residues 35-68 (AFAY…EVDA), 72-105 (SYIL…NPSL), and 120-153 (GEQA…APTN).

This sequence belongs to the Ycf3 family.

The protein resides in the plastid. The protein localises to the chloroplast thylakoid membrane. Its function is as follows. Essential for the assembly of the photosystem I (PSI) complex. May act as a chaperone-like factor to guide the assembly of the PSI subunits. The protein is Photosystem I assembly protein Ycf3 of Stigeoclonium helveticum (Green alga).